A 149-amino-acid polypeptide reads, in one-letter code: UPF0208 membrane protein VFMJ11_0876 (149 aa).

Helical transmembrane passes span 41 to 61 (FAVK…MVFN) and 69 to 89 (AIII…WLGN).

Belongs to the UPF0208 family.

It localises to the cell inner membrane. In Aliivibrio fischeri (strain MJ11) (Vibrio fischeri), this protein is UPF0208 membrane protein VFMJ11_0876.